Reading from the N-terminus, the 57-residue chain is UPF0391 membrane protein Nwi_2359 (57 aa).

2 helical membrane passes run 4–24 and 30–50; these read WVVT…GGIA and IAKI…VVGF.

It belongs to the UPF0391 family.

The protein resides in the cell membrane. The sequence is that of UPF0391 membrane protein Nwi_2359 from Nitrobacter winogradskyi (strain ATCC 25391 / DSM 10237 / CIP 104748 / NCIMB 11846 / Nb-255).